The sequence spans 804 residues: Endoplasmin (804 aa).

The first 21 residues, 1–21, serve as a signal peptide directing secretion; that stretch reads MRALWVLGLCCVLLTFGSVRA. Positions 42 to 44 match the SRT pseudosubstrate motif motif; it reads SRT. Residue Asn-62 is glycosylated (N-linked (GlcNAc...) asparagine). Ser-64 carries the phosphoserine modification. The N-linked (GlcNAc...) asparagine glycan is linked to Asn-107. 3 residues coordinate ATP: Asn-107, Asp-149, and Asn-162. At Lys-168 the chain carries N6-(2-hydroxyisobutyryl)lysine. Ser-172 bears the Phosphoserine mark. Phe-199 serves as a coordination point for ATP. N-linked (GlcNAc...) asparagine glycosylation is present at Asn-217. The residue at position 288 (Thr-288) is a Phosphothreonine; by CK2. Residues 288–323 are disordered; that stretch reads TVEEPMEEEEAAKEEKEDSDDEAAVEEEEEEKKPKT. Residues 289–317 show a composition bias toward acidic residues; it reads VEEPMEEEEAAKEEKEDSDDEAAVEEEEE. Position 306 is a phosphoserine; by CK2 (Ser-306). Ser-403 is subject to Phosphoserine. Lys-404 is subject to N6-succinyllysine. N-linked (GlcNAc...) asparagine glycosylation is present at Asn-445. The residue at position 447 (Ser-447) is a Phosphoserine. Lys-479 carries the N6-acetyllysine modification. Residues Asn-481 and Asn-502 are each glycosylated (N-linked (GlcNAc...) asparagine). Lys-633 bears the N6-succinyllysine mark. The disordered stretch occupies residues 750–804; it reads DPDAKVEEEPEEEPEETTEDTTEDTEQDDEEEMDAGTDDEEQETVKKSTAEKDEL. Positions 757-791 are enriched in acidic residues; the sequence is EEPEEEPEETTEDTTEDTEQDDEEEMDAGTDDEEQ. Residues Thr-766, Thr-770, Thr-774, and Thr-786 each carry the phosphothreonine; by CK2 modification. Positions 792-804 are enriched in basic and acidic residues; it reads ETVKKSTAEKDEL. A Prevents secretion from ER motif is present at residues 801-804; it reads KDEL.

Belongs to the heat shock protein 90 family. As to quaternary structure, homodimer; disulfide-linked. Component of an EIF2 complex at least composed of CELF1/CUGBP1, CALR, CALR3, EIF2S1, EIF2S2, HSP90B1 and HSPA5. Part of a large chaperone multiprotein complex comprising DNAJB11, HSP90B1, HSPA5, HYOU, PDIA2, PDIA4, PDIA6, PPIB, SDF2L1, UGGT1 and very small amounts of ERP29, but not, or at very low levels, CALR nor CANX. Interacts with AIMP1; regulates its retention in the endoplasmic reticulum. Hyperglycosylated form interacts with OS9; promoting its degradation by the endoplasmic reticulum associated degradation (ERAD). Interacts with CNPY3. This interaction is disrupted in the presence of ATP. Interacts with TLR4 and TLR9, but not with TLR3. Interacts with MZB1 in a calcium-dependent manner. Interacts with METTL23. Interacts with IL1B; the interaction facilitates cargo translocation into the ERGIC. Interacts with EIF2AK3. In terms of processing, phosphorylated by CK2. Post-translationally, N-glycosylated cotranslationally at Asn-217 by STT3A-containing OST-A complex: this glycosylation is constitutive. In response to various stress, 5 additional facultative sites (Asn-62, Asn-107, Asn-445, Asn-481 and Asn-502) can be glycosylated post-translationally by STT3B-containing OST-B complex, leading to a hyperglycosylated form that is degraded by the ER-associated degradation (ERAD) pathway. In normal conditions, the OST-A complex together with CCDC134 prevent glycosylation at facultative sites during protein folding, thereby preventing hyperglycosylation. Mechanistically, nascent HSP90B1 is tethered during translation to a specialized CCDC134-containing translocon that forms a microenvironment for its folding, in which STT3A associates with the SRT pseudosubstrate motif, and prevents access to facultative glycosylation sites until folding is completed, rendering its facultative sites inaccessible to the OST-B complex. Detected in heart muscle (at protein level).

The protein resides in the endoplasmic reticulum lumen. It is found in the sarcoplasmic reticulum lumen. Its subcellular location is the melanosome. It carries out the reaction ATP + H2O = ADP + phosphate + H(+). Its function is as follows. ATP-dependent chaperone involved in the processing of proteins in the endoplasmic reticulum, regulating their transport. Together with MESD, acts as a modulator of the Wnt pathway by promoting the folding of LRP6, a coreceptor of the canonical Wnt pathway. When associated with CNPY3, required for proper folding of Toll-like receptors. Promotes folding and trafficking of TLR4 to the cell surface. May participate in the unfolding of cytosolic leaderless cargos (lacking the secretion signal sequence) such as the interleukin 1/IL-1 to facilitate their translocation into the ERGIC (endoplasmic reticulum-Golgi intermediate compartment) and secretion; the translocation process is mediated by the cargo receptor TMED10. May also function in endoplasmic reticulum associated degradation (ERAD); it is however unclear whether it participates to ERAD or is a target of ERAD. The chain is Endoplasmin (HSP90B1) from Canis lupus familiaris (Dog).